We begin with the raw amino-acid sequence, 125 residues long: Ribosome-binding factor A (125 aa).

It belongs to the RbfA family. Monomer. Binds 30S ribosomal subunits, but not 50S ribosomal subunits or 70S ribosomes.

It is found in the cytoplasm. Its function is as follows. One of several proteins that assist in the late maturation steps of the functional core of the 30S ribosomal subunit. Associates with free 30S ribosomal subunits (but not with 30S subunits that are part of 70S ribosomes or polysomes). Required for efficient processing of 16S rRNA. May interact with the 5'-terminal helix region of 16S rRNA. In Fervidobacterium nodosum (strain ATCC 35602 / DSM 5306 / Rt17-B1), this protein is Ribosome-binding factor A.